The sequence spans 561 residues: AT-rich interactive domain-containing protein 3B (561 aa).

At M1 the chain carries N-acetylmethionine. The span at 1-17 shows a compositional bias: low complexity; it reads MEPLQQQQQQQQQQQKQ. Disordered stretches follow at residues 1 to 36, 53 to 122, and 136 to 179; these read MEPL…QQMR, LSAT…SKYF, and PMSN…WNLD. Residue S89 is modified to Phosphoserine. Positions 90 to 109 are enriched in acidic residues; it reads EPEEEDGGLEDEDGDDEVAE. Over residues 152–162 the composition is skewed to basic and acidic residues; sequence QAKEDHTKDAS. Polar residues predominate over residues 164–178; it reads ASPSVSTAGQPNWNL. A Phosphoserine modification is found at S165. Positions 203–365 are interaction with RB1; it reads SRDFAKLYEL…SPPKIRFPIL (163 aa). An ARID domain is found at 215-307; sequence DPERKEFLDD…YLYAYECEKK (93 aa). S311 bears the Phosphoserine mark. Residue R361 is modified to Asymmetric dimethylarginine. Positions 370-397 are disordered; it reads SSGTNTSSPRISPATTLRKGDGAPVTTV. Residues 419–517 enclose the REKLES domain; the sequence is AALEQLRERL…GVLFAQKPVV (99 aa). Residues 490 to 513 form an interaction with ARID3A region; it reads SSIGSINMSVDIDGTTYAGVLFAQ. Low complexity predominate over residues 523–552; sequence SAPQSLGSSASSSSSSHCSPSPTSSRGTPS. Residues 523–561 form a disordered region; it reads SAPQSLGSSASSSSSSHCSPSPTSSRGTPSAEPSTSWSL.

Heterodimer with ARID3A. Interacts with unphosphorylated RB1. As to expression, expressed in placenta, testis and leukocytes. Expressed in neuroblastoma. Present in K-562 erythrocytic leukemia cell line (at protein level).

The protein resides in the nucleus. In terms of biological role, transcription factor which may be involved in neuroblastoma growth and malignant transformation. Favors nuclear targeting of ARID3A. The chain is AT-rich interactive domain-containing protein 3B (ARID3B) from Homo sapiens (Human).